The sequence spans 339 residues: Zinc metalloprotease MJ0392 (339 aa).

2 helical membrane passes run 10–30 and 33–53; these read IMGI…VIIG and IMNN…SVVL. His-54 is a binding site for Zn(2+). The active site involves Glu-55. Position 58 (His-58) interacts with Zn(2+). 2 consecutive transmembrane segments (helical) span residues 96 to 116 and 125 to 145; these read IAGP…SQFF and LLYT…IPAF. Asp-148 is a binding site for Zn(2+). 2 helical membrane-spanning segments follow: residues 180–200 and 251–271; these read IMLL…SLFV and YFGY…IGNI. 2 CBS domains span residues 226–281 and 281–335; these read MTPN…VRDY and YMEK…ELKE.

This sequence belongs to the peptidase M50B family. In terms of assembly, monomer. Zn(2+) is required as a cofactor.

The protein localises to the cell membrane. Inhibited by 1,10-phenanthroline. A site-2 regulated intramembrane protease (S2P) that cleaves type-2 transmembrane proteins within their membrane-spanning domains; its endogenous substrate is unknown. Regulated intramembrane proteolysis (RIP) occurs when an extracytoplasmic signal triggers a concerted proteolytic cascade to transmit information and elicit cellular responses. A membrane-spanning regulatory substrate protein is first cut extracytoplasmically (site-1 protease, S1P), then within the membrane itself (site-2 protease, S2P, this enzyme), while cytoplasmic proteases finish degrading the regulatory protein, liberating the effector protein. Possible signals, S1P and substrates are unknown in this organism. The polypeptide is Zinc metalloprotease MJ0392 (Methanocaldococcus jannaschii (strain ATCC 43067 / DSM 2661 / JAL-1 / JCM 10045 / NBRC 100440) (Methanococcus jannaschii)).